A 297-amino-acid chain; its full sequence is tRNA dimethylallyltransferase (297 aa).

10 to 17 (GITASGKS) is an ATP binding site. A substrate-binding site is contributed by 12-17 (TASGKS). The tract at residues 36–39 (DSKQ) is interaction with substrate tRNA.

This sequence belongs to the IPP transferase family. Monomer. Mg(2+) serves as cofactor.

It catalyses the reaction adenosine(37) in tRNA + dimethylallyl diphosphate = N(6)-dimethylallyladenosine(37) in tRNA + diphosphate. Catalyzes the transfer of a dimethylallyl group onto the adenine at position 37 in tRNAs that read codons beginning with uridine, leading to the formation of N6-(dimethylallyl)adenosine (i(6)A). This Wolbachia sp. subsp. Brugia malayi (strain TRS) protein is tRNA dimethylallyltransferase.